A 98-amino-acid polypeptide reads, in one-letter code: snRNA-activating protein complex subunit 5 (98 aa).

The segment covering 73 to 82 has biased composition (polar residues); that stretch reads QTTLELSTKS. The tract at residues 73–98 is disordered; sequence QTTLELSTKSHVTEEEEEEEEEESDS. Thr85 is modified (phosphothreonine). A compositionally biased stretch (acidic residues) spans 86-98; that stretch reads EEEEEEEEEESDS.

In terms of assembly, part of the SNAPc complex composed of 5 subunits: SNAPC1, SNAPC2, SNAPC3, SNAPC4 and SNAPC5. SNAPC5 interacts with SNAPC4.

Its subcellular location is the nucleus. Functionally, part of the SNAPc complex required for the transcription of both RNA polymerase II and III small-nuclear RNA genes. Binds to the proximal sequence element (PSE), a non-TATA-box basal promoter element common to these 2 types of genes. Recruits TBP and BRF2 to the U6 snRNA TATA box. In Homo sapiens (Human), this protein is snRNA-activating protein complex subunit 5 (SNAPC5).